A 350-amino-acid polypeptide reads, in one-letter code: MFGLKRNAVIGLNLYCGGAGLAAGSGGASSSGGRLVAVGKEATARREVGGGEAGAVIGGSAGASPPATLAPDARRVARPSPIGAEGPDVTATPPKLLFFAATRCASPPEEMEGPAADAIMSPEEELDGYEPEPLGKRPAVLPLLELVGEASSGPGTDGSLPSTPPPAEEEEDELFRQSLEIISRYLREQATGAKDAKPLGGSGAASRKALETLRRVGDGVQRNHETAFQGMLRKLDIKNENDVKSLSRVMVHVFSDGVTNWGRIVTLISFGAFVAKHLKSINQESCIEPLAESITDVLVRTKRDWLVKQRGWDGFVEFFHVEDLEGGIRNVLLAFAGVAGVGAGLAYLIR.

Residues lysine 5 and lysine 40 each participate in a glycyl lysine isopeptide (Lys-Gly) (interchain with G-Cter in ubiquitin) cross-link. A PEST-like region spans residues 104 to 175 (CASPPEEMEG…PAEEEEDELF (72 aa)). Serine 121 carries the post-translational modification Phosphoserine. Lysine 136 participates in a covalent cross-link: Glycyl lysine isopeptide (Lys-Gly) (interchain with G-Cter in ubiquitin). Positions 148–170 (GEASSGPGTDGSLPSTPPPAEEE) are disordered. The residue at position 159 (serine 159) is a Phosphoserine; by GSK3-alpha and GSK3-beta. Serine 162 is modified (phosphoserine). The residue at position 163 (threonine 163) is a Phosphothreonine; by MAPK. Glycyl lysine isopeptide (Lys-Gly) (interchain with G-Cter in ubiquitin) cross-links involve residues lysine 194 and lysine 197. Residues 209–223 (ALETLRRVGDGVQRN) carry the BH3 motif. Positions 252–272 (HVFSDGVTNWGRIVTLISFGA) match the BH1 motif. Residues 304–319 (DWLVKQRGWDGFVEFF) carry the BH2 motif. The helical transmembrane segment at 328 to 348 (IRNVLLAFAGVAGVGAGLAYL) threads the bilayer.

Belongs to the Bcl-2 family. In terms of assembly, interacts with HIF3A (via C-terminus domain). Interacts with BOK, BIK, BAX, BAK1, and TPT1. Interacts with unphosphorylated BAD. Interacts with BMF, BBC3 and PMAIP1. Interacts with BOP. Interacts with BCL2L11; may sequester BCL2L11 to prevent its pro-apoptotic activity. Interacts with GIMAP5 and HSPA8/HSC70; the interaction between HSPA8 and MCL1 is impaired in the absence of GIMAP5. In terms of processing, cleaved by CASP3 during apoptosis, yielding a pro-apoptotic C-terminal fragment. Post-translationally, rapidly degraded in the absence of phosphorylation in the PEST region. Phosphorylated on Ser-159, by GSK3, in response to IL3/interleukin-3 withdrawal. Phosphorylation at Ser-159 induces ubiquitination and proteasomal degradation, abrogating the anti-apoptotic activity. Treatment with taxol or okadaic acid induces phosphorylation on additional sites. In terms of processing, ubiquitinated. Ubiquitination is induced by phosphorylation at Ser-159. Deubiquitinated by USP20; leading to increased stability.

It localises to the membrane. It is found in the cytoplasm. The protein resides in the mitochondrion. The protein localises to the nucleus. Its subcellular location is the nucleoplasm. Its function is as follows. Involved in the regulation of apoptosis versus cell survival, and in the maintenance of viability but not of proliferation. Mediates its effects by interactions with a number of other regulators of apoptosis. The polypeptide is Induced myeloid leukemia cell differentiation protein Mcl-1 homolog (MCL1) (Felis catus (Cat)).